The chain runs to 417 residues: Serine hydroxymethyltransferase (417 aa).

(6S)-5,6,7,8-tetrahydrofolate-binding positions include L121 and 125 to 127 (GHL). K229 is subject to N6-(pyridoxal phosphate)lysine. 355–357 (SPF) serves as a coordination point for (6S)-5,6,7,8-tetrahydrofolate.

This sequence belongs to the SHMT family. Homodimer. Requires pyridoxal 5'-phosphate as cofactor.

It localises to the cytoplasm. The enzyme catalyses (6R)-5,10-methylene-5,6,7,8-tetrahydrofolate + glycine + H2O = (6S)-5,6,7,8-tetrahydrofolate + L-serine. Its pathway is one-carbon metabolism; tetrahydrofolate interconversion. It participates in amino-acid biosynthesis; glycine biosynthesis; glycine from L-serine: step 1/1. In terms of biological role, catalyzes the reversible interconversion of serine and glycine with tetrahydrofolate (THF) serving as the one-carbon carrier. This reaction serves as the major source of one-carbon groups required for the biosynthesis of purines, thymidylate, methionine, and other important biomolecules. Also exhibits THF-independent aldolase activity toward beta-hydroxyamino acids, producing glycine and aldehydes, via a retro-aldol mechanism. The chain is Serine hydroxymethyltransferase from Buchnera aphidicola subsp. Baizongia pistaciae (strain Bp).